The primary structure comprises 555 residues: Urocanate hydratase (555 aa).

NAD(+) contacts are provided by residues 51–52 (GG), Q129, 175–177 (GMG), E195, 241–242 (NA), 262–266 (QTSAH), 272–273 (YL), and Y321. Residue C409 is part of the active site. An NAD(+)-binding site is contributed by G491.

This sequence belongs to the urocanase family. Requires NAD(+) as cofactor.

It localises to the cytoplasm. It catalyses the reaction 4-imidazolone-5-propanoate = trans-urocanate + H2O. It functions in the pathway amino-acid degradation; L-histidine degradation into L-glutamate; N-formimidoyl-L-glutamate from L-histidine: step 2/3. Catalyzes the conversion of urocanate to 4-imidazolone-5-propionate. The protein is Urocanate hydratase of Hyphomonas neptunium (strain ATCC 15444).